A 373-amino-acid chain; its full sequence is P2Y purinoceptor 2 (373 aa).

The Extracellular segment spans residues 1-32 (MAADLEPWNSTINGTWEGDELGYKCRFNEDFK). 2 N-linked (GlcNAc...) asparagine glycosylation sites follow: Asn-9 and Asn-13. A helical transmembrane segment spans residues 33–59 (YVLLPVSYGVVCVLGLCLNVVALYIFL). The Cytoplasmic segment spans residues 60-70 (CRLKTWNASTT). Residues 71–93 (YMFHLAVSDSLYAASLPLLVYYY) form a helical membrane-spanning segment. At 94-110 (ARGDHWPFSTVLCKLVR) the chain is on the extracellular side. Cys-106 and Cys-183 are joined by a disulfide. The chain crosses the membrane as a helical span at residues 111–129 (FLFYTNLYCSILFLTCISV). Over 130–152 (HRCLGVLRPLHSLRWGRARYARR) the chain is Cytoplasmic. Residues 153–172 (VAAVVWVLVLACQAPVLYFV) traverse the membrane as a helical segment. The Extracellular segment spans residues 173 to 194 (TTSVRGTRITCHDTSARELFSH). A helical membrane pass occupies residues 195–220 (FVAYSSVMLGLLFAVPFSVILVCYVL). The Cytoplasmic segment spans residues 221 to 246 (MARRLLKPAYGTTGGLPRAKRKSVRT). Residues 247 to 269 (IALVLAVFALCFLPFHVTRTLYY) traverse the membrane as a helical segment. The Extracellular portion of the chain corresponds to 270-287 (SFRSLDLSCHTLNAINMA). Residues 288–309 (YKITRPLASANSCLDPVLYFLA) traverse the membrane as a helical segment. The Cytoplasmic portion of the chain corresponds to 310–373 (GQRLVRFARD…AGSETKDIRL (64 aa)). A disordered region spans residues 318–373 (RDAKPPTEPTPSPQARRKLGLHRPNRTVRKDLSVSSDDSRRTESTPAGSETKDIRL). Basic residues predominate over residues 332–344 (ARRKLGLHRPNRT). The segment covering 345–360 (VRKDLSVSSDDSRRTE) has biased composition (basic and acidic residues).

Belongs to the G-protein coupled receptor 1 family. In terms of tissue distribution, spleen, testis, kidney, liver, lung, heart and brain.

It localises to the cell membrane. Functionally, receptor for ATP and UTP coupled to G-proteins that activate a phosphatidylinositol-calcium second messenger system. The affinity range is UTP = ATP &gt; ATP-gamma-S &gt;&gt; 2-methylthio-ATP = ADP. The protein is P2Y purinoceptor 2 (P2ry2) of Mus musculus (Mouse).